Consider the following 152-residue polypeptide: Superoxide dismutase [Cu-Zn] (152 aa).

Ser2 carries the N-acetylserine modification. Cu cation-binding residues include His44, His46, and His61. A disulfide bond links Cys55 and Cys144. His61, His69, His78, and Asp81 together coordinate Zn(2+). His118 contributes to the Cu cation binding site.

It belongs to the Cu-Zn superoxide dismutase family. As to quaternary structure, monomer. Cu cation serves as cofactor. Zn(2+) is required as a cofactor.

Its subcellular location is the cytoplasm. It catalyses the reaction 2 superoxide + 2 H(+) = H2O2 + O2. Its activity is regulated as follows. Inhibited by KCN and diethyldithiocarbamate. In terms of biological role, destroys radicals which are normally produced within the cells and which are toxic to biological systems. The plasma superoxide dismutase has phagocytosis-stimulating activity and may play an important role in the biological defenses of the organism. This Halocynthia roretzi (Sea squirt) protein is Superoxide dismutase [Cu-Zn].